A 428-amino-acid polypeptide reads, in one-letter code: GTPase Obg (428 aa).

Residues 1–158 (MFVDQVKIYV…RDVILELKVL (158 aa)) form the Obg domain. The region spanning 159–329 (ADVGLVGFPS…LLFEVANLIE (171 aa)) is the OBG-type G domain. GTP contacts are provided by residues 165–172 (GFPSVGKS), 190–194 (FTTIV), 212–215 (DLPG), 282–285 (NKMD), and 310–312 (SAV). Mg(2+) contacts are provided by S172 and T192. The OCT domain maps to 350–428 (KFETEGVKFD…ILEYEFEFID (79 aa)).

Belongs to the TRAFAC class OBG-HflX-like GTPase superfamily. OBG GTPase family. Monomer. Mg(2+) serves as cofactor.

Its subcellular location is the cytoplasm. An essential GTPase which binds GTP, GDP and possibly (p)ppGpp with moderate affinity, with high nucleotide exchange rates and a fairly low GTP hydrolysis rate. Plays a role in control of the cell cycle, stress response, ribosome biogenesis and in those bacteria that undergo differentiation, in morphogenesis control. The chain is GTPase Obg from Bacillus thuringiensis (strain Al Hakam).